We begin with the raw amino-acid sequence, 258 residues long: Acyl-[acyl-carrier-protein]--UDP-N-acetylglucosamine O-acyltransferase (258 aa).

This sequence belongs to the transferase hexapeptide repeat family. LpxA subfamily. As to quaternary structure, homotrimer.

It localises to the cytoplasm. The enzyme catalyses a (3R)-hydroxyacyl-[ACP] + UDP-N-acetyl-alpha-D-glucosamine = a UDP-3-O-[(3R)-3-hydroxyacyl]-N-acetyl-alpha-D-glucosamine + holo-[ACP]. It functions in the pathway glycolipid biosynthesis; lipid IV(A) biosynthesis; lipid IV(A) from (3R)-3-hydroxytetradecanoyl-[acyl-carrier-protein] and UDP-N-acetyl-alpha-D-glucosamine: step 1/6. In terms of biological role, involved in the biosynthesis of lipid A, a phosphorylated glycolipid that anchors the lipopolysaccharide to the outer membrane of the cell. The chain is Acyl-[acyl-carrier-protein]--UDP-N-acetylglucosamine O-acyltransferase from Ectopseudomonas mendocina (strain ymp) (Pseudomonas mendocina).